Consider the following 772-residue polypeptide: Putative ribosomal protein S6 kinase alpha-2 (772 aa).

A Protein kinase 1 domain is found at 17-284 (FALLRVLGKG…VDEIKNHKFM (268 aa)). Residues 23 to 31 (LGKGAYGKV) and K49 each bind ATP. Residue D145 is the Proton acceptor of the active site. Phosphoserine; by autocatalysis occurs at positions 180, 342, and 347. One can recognise an AGC-kinase C-terminal domain in the interval 285-353 (SSIDWDAAVK…VSPSVIFAND (69 aa)). Residues 382–653 (KSDAGLLGKG…MQELTAHMWL (272 aa)) enclose the Protein kinase 2 domain. Residues 388–396 (LGKGAFSVV) and K411 contribute to the ATP site. The active-site Proton acceptor is D500. Residues 706–772 (RGIKRQSGDK…IRETRGSDSS (67 aa)) form a disordered region. Phosphoserine; by autocatalysis is present on S712. Polar residues-rich tracts occupy residues 718-727 (SGNSKNSRVT) and 739-748 (EMTSSTSRPS).

Belongs to the protein kinase superfamily. AGC Ser/Thr protein kinase family. S6 kinase subfamily. It depends on Mg(2+) as a cofactor.

It carries out the reaction L-seryl-[protein] + ATP = O-phospho-L-seryl-[protein] + ADP + H(+). The catalysed reaction is L-threonyl-[protein] + ATP = O-phospho-L-threonyl-[protein] + ADP + H(+). Activated by multiple phosphorylations on threonine and serine residues. Functionally, serine/threonine kinase that may play a role in mediating the mitogen- and stress-induced effects on transcription. May repress transcription via phosphorylation of 'Ser-1' of histone H2A. May phosphorylate histone H3. This is Putative ribosomal protein S6 kinase alpha-2 (rskn-2) from Caenorhabditis elegans.